Reading from the N-terminus, the 100-residue chain is Cytochrome c2 iso-1 (100 aa).

Heme c is bound by residues cysteine 11, cysteine 14, histidine 15, and methionine 76.

It belongs to the cytochrome c family. Binds 1 heme c group covalently per subunit.

Its function is as follows. Cytochrome c2 is found mainly in purple, non-sulfur, photosynthetic bacteria where it functions as the electron donor to the oxidized bacteriochlorophyll in the photophosphorylation pathway. However, it may also have a role in the respiratory chain and is found in some non-photosynthetic bacteria. This chain is Cytochrome c2 iso-1, found in Magnetospirillum molischianum (Rhodospirillum molischianum).